Here is a 122-residue protein sequence, read N- to C-terminus: Large ribosomal subunit protein uL14 (122 aa).

It belongs to the universal ribosomal protein uL14 family. As to quaternary structure, part of the 50S ribosomal subunit. Forms a cluster with proteins L3 and L19. In the 70S ribosome, L14 and L19 interact and together make contacts with the 16S rRNA in bridges B5 and B8.

Its function is as follows. Binds to 23S rRNA. Forms part of two intersubunit bridges in the 70S ribosome. This Rhodococcus erythropolis (strain PR4 / NBRC 100887) protein is Large ribosomal subunit protein uL14.